The chain runs to 245 residues: rRNA adenine N-6-methyltransferase (245 aa).

Residues Asn-10, Leu-12, Gly-37, Glu-58, Asp-83, and Ser-100 each contribute to the S-adenosyl-L-methionine site.

This sequence belongs to the class I-like SAM-binding methyltransferase superfamily. rRNA adenine N(6)-methyltransferase family.

It carries out the reaction adenosine(2085) in 23S rRNA + 2 S-adenosyl-L-methionine = N(6)-dimethyladenosine(2085) in 23S rRNA + 2 S-adenosyl-L-homocysteine + 2 H(+). In terms of biological role, this protein produces a dimethylation of the adenine residue at position 2085 in 23S rRNA, resulting in reduced affinity between ribosomes and macrolide-lincosamide-streptogramin B antibiotics. This is rRNA adenine N-6-methyltransferase (ermBP) from Clostridium perfringens.